Reading from the N-terminus, the 630-residue chain is L-amino-acid oxidase (630 aa).

The signal sequence occupies residues Met-1–Leu-21. Cys-35 and Cys-198 are disulfide-bonded. A glycan (N-linked (GlcNAc...) asparagine) is linked at Asn-53. Residues Val-68 to Ala-69, Glu-88 to Ala-89, Arg-96, and Gly-112 to Arg-115 each bind FAD. Residue Arg-115 participates in substrate binding. Asn-133 and Asn-219 each carry an N-linked (GlcNAc...) asparagine glycan. Val-286 is an FAD binding site. Substrate is bound at residue Tyr-395. FAD contacts are provided by residues Glu-479 and Gly-486–Ala-491. Gly-486–Trp-487 contacts substrate. Residues Gly-532 to Lys-554 form a disordered region.

Belongs to the flavin monoamine oxidase family. FIG1 subfamily. FAD serves as cofactor. In terms of tissue distribution, primarily found in immune tissues. Primarily found in immune tissues, mostly in B-lymphocytes. As to expression, restricted to the testis, predominantly in Sertoli cells at the periphery of the ducts, and the brain, including Purkinje cells, hippocampus and mitral cells in the olfactory bulb. No isoform 2 expression in fetal tissues.

The protein localises to the secreted. Its subcellular location is the cytoplasmic vesicle. The protein resides in the secretory vesicle. It is found in the acrosome. It localises to the lysosome. The catalysed reaction is an L-alpha-amino acid + O2 + H2O = a 2-oxocarboxylate + H2O2 + NH4(+). It catalyses the reaction L-tryptophan + O2 + H2O = indole-3-pyruvate + H2O2 + NH4(+). It carries out the reaction L-phenylalanine + O2 + H2O = 3-phenylpyruvate + H2O2 + NH4(+). The enzyme catalyses L-tyrosine + O2 + H2O = 3-(4-hydroxyphenyl)pyruvate + H2O2 + NH4(+). The catalysed reaction is L-arginine + O2 + H2O = 5-guanidino-2-oxopentanoate + H2O2 + NH4(+). It functions in the pathway amino-acid degradation; L-tryptophan degradation via pyruvate pathway. Secreted L-amino-acid oxidase that acts as a key immunoregulator. Has preference for L-aromatic amino acids: converts phenylalanine (Phe), tyrosine (Tyr) and tryptophan (Trp) to phenylpyruvic acid (PP), hydroxyphenylpyruvic acid (HPP), and indole-3-pyruvic acid (I3P), respectively. Also has weak L-arginine oxidase activity. Acts as a negative regulator of anti-tumor immunity by mediating Trp degradation via an indole pyruvate pathway that activates the transcription factor AHR. IL4I1-mediated Trp catabolism generates I3P, giving rise to indole metabolites (indole-3-acetic acid (IAA) and indole-3-aldehyde (I3A)) and kynurenic acid, which act as ligands for AHR, a ligand-activated transcription factor that plays important roles in immunity and cancer. AHR activation by indoles following IL4I1-mediated Trp degradation enhances tumor progression by promoting cancer cell motility and suppressing adaptive immunity. Also has an immunoregulatory function in some immune cell, probably by mediating Trp degradation and promoting downstream AHR activation: inhibits T-cell activation and proliferation, promotes the differentiation of naive CD4(+) T-cells into FOXP3(+) regulatory T-cells (Treg) and regulates the development and function of B-cells. Also regulates M2 macrophage polarization by inhibiting T-cell activation. Also has antibacterial properties by inhibiting growth of Gram negative and Gram positive bacteria through the production of NH4(+) and H2O2. The protein is L-amino-acid oxidase of Mus musculus (Mouse).